A 135-amino-acid polypeptide reads, in one-letter code: Large ribosomal subunit protein uL16c (135 aa).

Residues 1–23 (MLSPKKTKFRKEHRGRMKGRSSR) are compositionally biased toward basic residues. The segment at 1-24 (MLSPKKTKFRKEHRGRMKGRSSRG) is disordered.

This sequence belongs to the universal ribosomal protein uL16 family. As to quaternary structure, part of the 50S ribosomal subunit.

It localises to the plastid. The protein localises to the chloroplast. The polypeptide is Large ribosomal subunit protein uL16c (Pelargonium hortorum (Common geranium)).